A 337-amino-acid polypeptide reads, in one-letter code: Diacylglycerol O-acyltransferase 2-like protein 6 (337 aa).

Helical transmembrane passes span 22–42 (IPVY…LLLF) and 102–122 (YIIL…NFAT).

Belongs to the diacylglycerol acyltransferase family.

The protein resides in the endoplasmic reticulum membrane. The enzyme catalyses 1,2-di-(9Z-octadecenoyl)-sn-glycerol + (9Z)-octadecenoyl-CoA = 1,2,3-tri-(9Z-octadecenoyl)-glycerol + CoA. In terms of biological role, diglyceride acyltransferase that uses fatty acyl-CoA as substrate. Particularly active with oleate as a substrate. Has no wax synthase activity to produce wax esters. This chain is Diacylglycerol O-acyltransferase 2-like protein 6 (Dgat2l6), found in Mus musculus (Mouse).